The chain runs to 124 residues: Histone H2B 1/2 (124 aa).

Residues 1 to 32 form a disordered region; that stretch reads MPEPAKAAPKKGSKKAVTKTAGKGGKKRKRTR. Lysine 6 and lysine 11 each carry N6-acetyllysine. Residues 8–17 are compositionally biased toward basic residues; that stretch reads APKKGSKKAV. Serine 13 is subject to Phosphoserine. 2 positions are modified to N6-acetyllysine: lysine 14 and lysine 19. Serine 111 is a glycosylation site (O-linked (GlcNAc) serine). Lysine 119 is covalently cross-linked (Glycyl lysine isopeptide (Lys-Gly) (interchain with G-Cter in ubiquitin)).

This sequence belongs to the histone H2B family. As to quaternary structure, the nucleosome is a histone octamer containing two molecules each of H2A, H2B, H3 and H4 assembled in one H3-H4 heterotetramer and two H2A-H2B heterodimers. The octamer wraps approximately 147 bp of DNA. In terms of processing, monoubiquitination of Lys-119 by the BRE1 gives a specific tag for epigenetic transcriptional activation and is also prerequisite for histone H3 'Lys-4' and 'Lys-79' methylation. Post-translationally, phosphorylated during apoptosis; which facilitates apoptotic chromatin condensation. GlcNAcylation at Ser-111 promotes monoubiquitination of Lys-119. It fluctuates in response to extracellular glucose, and associates with transcribed genes.

It is found in the nucleus. The protein resides in the chromosome. Its function is as follows. Core component of nucleosome. Nucleosomes wrap and compact DNA into chromatin, limiting DNA accessibility to the cellular machineries which require DNA as a template. Histones thereby play a central role in transcription regulation, DNA repair, DNA replication and chromosomal stability. DNA accessibility is regulated via a complex set of post-translational modifications of histones, also called histone code, and nucleosome remodeling. This is Histone H2B 1/2 from Danio rerio (Zebrafish).